The following is a 282-amino-acid chain: Protease HtpX homolog (282 aa).

2 helical membrane-spanning segments follow: residues Thr6–Gly26 and Gly29–His49. His130 contributes to the Zn(2+) binding site. Glu131 is a catalytic residue. His134 lines the Zn(2+) pocket. 2 helical membrane passes run Ile140–Ala160 and Ile180–Ile200. Glu205 is a binding site for Zn(2+).

Belongs to the peptidase M48B family. The cofactor is Zn(2+).

Its subcellular location is the cell inner membrane. This Thermodesulfovibrio yellowstonii (strain ATCC 51303 / DSM 11347 / YP87) protein is Protease HtpX homolog.